Reading from the N-terminus, the 176-residue chain is Negative modulator of initiation of replication (176 aa).

It belongs to the SeqA family. Homodimer. Polymerizes to form helical filaments.

The protein resides in the cytoplasm. In terms of biological role, negative regulator of replication initiation, which contributes to regulation of DNA replication and ensures that replication initiation occurs exactly once per chromosome per cell cycle. Binds to pairs of hemimethylated GATC sequences in the oriC region, thus preventing assembly of replication proteins and re-initiation at newly replicated origins. Repression is relieved when the region becomes fully methylated. The chain is Negative modulator of initiation of replication from Hamiltonella defensa subsp. Acyrthosiphon pisum (strain 5AT).